Here is a 369-residue protein sequence, read N- to C-terminus: Chorismate synthase (369 aa).

Residues Arg-48 and Arg-54 each contribute to the NADP(+) site. FMN contacts are provided by residues 125 to 127 (RSS), 238 to 239 (NA), Gly-278, 293 to 297 (KPTSS), and Arg-319.

The protein belongs to the chorismate synthase family. As to quaternary structure, homotetramer. It depends on FMNH2 as a cofactor.

The enzyme catalyses 5-O-(1-carboxyvinyl)-3-phosphoshikimate = chorismate + phosphate. It functions in the pathway metabolic intermediate biosynthesis; chorismate biosynthesis; chorismate from D-erythrose 4-phosphate and phosphoenolpyruvate: step 7/7. Its function is as follows. Catalyzes the anti-1,4-elimination of the C-3 phosphate and the C-6 proR hydrogen from 5-enolpyruvylshikimate-3-phosphate (EPSP) to yield chorismate, which is the branch point compound that serves as the starting substrate for the three terminal pathways of aromatic amino acid biosynthesis. This reaction introduces a second double bond into the aromatic ring system. This is Chorismate synthase from Cupriavidus metallidurans (strain ATCC 43123 / DSM 2839 / NBRC 102507 / CH34) (Ralstonia metallidurans).